Here is a 206-residue protein sequence, read N- to C-terminus: Pyridoxine/pyridoxamine 5'-phosphate oxidase (206 aa).

FMN is bound by residues 53–58, 68–69, Lys75, and Gln97; these read RMVLLK and YT. Lys58 lines the substrate pocket. Positions 115, 119, and 123 each coordinate substrate. FMN-binding positions include 132–133 and Trp177; that span reads QS. 183–185 contacts substrate; the sequence is RLH. FMN is bound at residue Arg187.

It belongs to the pyridoxamine 5'-phosphate oxidase family. As to quaternary structure, homodimer. The cofactor is FMN.

It catalyses the reaction pyridoxamine 5'-phosphate + O2 + H2O = pyridoxal 5'-phosphate + H2O2 + NH4(+). It carries out the reaction pyridoxine 5'-phosphate + O2 = pyridoxal 5'-phosphate + H2O2. Its pathway is cofactor metabolism; pyridoxal 5'-phosphate salvage; pyridoxal 5'-phosphate from pyridoxamine 5'-phosphate: step 1/1. The protein operates within cofactor metabolism; pyridoxal 5'-phosphate salvage; pyridoxal 5'-phosphate from pyridoxine 5'-phosphate: step 1/1. Its function is as follows. Catalyzes the oxidation of either pyridoxine 5'-phosphate (PNP) or pyridoxamine 5'-phosphate (PMP) into pyridoxal 5'-phosphate (PLP). The protein is Pyridoxine/pyridoxamine 5'-phosphate oxidase of Rhizobium meliloti (strain 1021) (Ensifer meliloti).